Here is a 1459-residue protein sequence, read N- to C-terminus: DNA-binding protein RFX7 (1459 aa).

The tract at residues 1-27 is disordered; sequence MAEEQQQPPPQQLDAPQQLPLSAPNPG. Over residues 12–21 the composition is skewed to low complexity; the sequence is QLDAPQQLPL. Residues 108 to 183 constitute a DNA-binding region (RFX-type winged-helix); it reads AFSWIRNTLE…YCYSGLRKKA (76 aa). Residues 188–193 carry the PxLPxI/L motif; mediates interaction with ANKRA2 and RFXANK motif; that stretch reads PTLPNL. 6 disordered regions span residues 303–347, 404–428, 482–590, 634–659, 688–716, and 918–1016; these read AKQQ…LPNG, SVKQTPKTPQNVPASPGGDRSARHR, PSNS…GVTE, FTSTSSPSNGDSVNKDPKICTKSPRK, GQKPGTVKKDQKVPHSGKTESSTAGAQIP, and SVTP…VPPS. Polar residues-rich tracts occupy residues 404–416 and 482–502; these read SVKQTPKTPQNVP and PSNSNAPLKHSASVSSATGTT. Over residues 521–534 the composition is skewed to low complexity; that stretch reads SPGSRASSTGGTSA. Residues 537–549 are compositionally biased toward basic and acidic residues; the sequence is VKMEPEGSSDEHP. Composition is skewed to polar residues over residues 562-578, 634-645, and 706-716; these read PLTTSSALWGQKSNTDG, FTSTSSPSNGDS, and TESSTAGAQIP. A compositionally biased stretch (pro residues) spans 947–963; it reads TPTPTPTPTPTPTPTPT. Positions 971–1009 are enriched in polar residues; sequence GSQSLSRESPCSRLAQTTPVDSALGSSRHTPIGTPHSNC.

The protein belongs to the RFX family. Interacts (via PxLPxI/L motif) with RFXANK (via ankyrin repeats). Interacts (via PxLPxI/L motif) with ANKRA2 (via ankyrin repeats). As to expression, expressed in spleen and lymph node and to a lower extend in brain (at protein level). Expressed in lymphoid organs and lymphoid cell subsets. Expressed throughout natural killer (NK) cell maturation.

It localises to the nucleus. Its function is as follows. Transcription factor. Acts as a transcriptional activator by binding to promoter regions of target genes, such as Rec8, Mxd4 and Ddit4. Plays a role in natural killer (NK) cell maintenance and immunity. May play a role in the process of ciliogenesis in the neural tube and neural tube closure. This Mus musculus (Mouse) protein is DNA-binding protein RFX7.